Consider the following 343-residue polypeptide: Flagellar motor switch protein FliG (343 aa).

Residues 137 to 140 carry the Part of the EHPQR-motif motif; it reads EHPQ. An M-F-X-F motif; its intrinsic flexibility is probably coupled to flagellar rotation motif is present at residues 245 to 248; the sequence is MFTF.

The protein belongs to the FliG family.

Its subcellular location is the cell inner membrane. The protein localises to the bacterial flagellum basal body. One of the proteins that forms a switch complex that is proposed to be located at the base of the basal body. This complex interacts with chemotaxis proteins (such as CheY) in addition to contacting components of the motor that determine the direction of flagellar rotation. Required for flagellum synthesis and motility. In H.pylori four flagellar switch proteins are encoded, FliG, FliM, FliN and FliY. This Helicobacter pylori (strain ATCC 700392 / 26695) (Campylobacter pylori) protein is Flagellar motor switch protein FliG.